Here is a 414-residue protein sequence, read N- to C-terminus: Cyclohex-1-ene-1-carbonyl-CoA dehydrogenase (414 aa).

Aspartate 124 serves as the catalytic Proton acceptor. FAD is bound by residues alanine 157, threonine 158, serine 164, and threonine 190. Cyclohex-1-ene-1-carbonyl-CoA is bound at residue serine 164. Serine 164 lines the cyclohexa-1,5-diene-1-carbonyl-CoA pocket. Lysine 211, arginine 275, and threonine 396 together coordinate cyclohex-1-ene-1-carbonyl-CoA. Lysine 211, arginine 275, and threonine 396 together coordinate cyclohexa-1,5-diene-1-carbonyl-CoA. 2 residues coordinate FAD: threonine 398 and glutamine 400. Arginine 408 provides a ligand contact to cyclohex-1-ene-1-carbonyl-CoA. Arginine 408 serves as a coordination point for cyclohexa-1,5-diene-1-carbonyl-CoA.

It belongs to the acyl-CoA dehydrogenase family. As to quaternary structure, homotetramer. It depends on FAD as a cofactor.

The catalysed reaction is cyclohex-1-ene-1-carbonyl-CoA + oxidized [electron-transfer flavoprotein] + H(+) = cyclohexa-1,5-diene-1-carbonyl-CoA + reduced [electron-transfer flavoprotein]. Mediates the conversion of cyclohex-1-ene-1-carbonyl-CoA (Ch1CoA) into (E)-2-cyclohex-1,5-diene-1-carbonyl-CoA in biosynthesis of cyclohexane-1-carboxylate, a by-product produced during fermentation of benzoate and crotonate to acetate. Also able to further convert (E)-2-cyclohex-1,5-diene-1-carbonyl-CoA to benzoyl-CoA. This chain is Cyclohex-1-ene-1-carbonyl-CoA dehydrogenase, found in Syntrophus aciditrophicus (strain SB).